The following is a 285-amino-acid chain: MSIKTIKYFSTIIVAVVAVLAGWWLWNYYMQSPWTRDGKIRAEQVSITPQVSGRIVELNIKDNQLVNAGDLLLTIDKTPFQIAELNAQAQLAKAQSDLAKANNEANRRRHLSQNFISAEELDTANLNVKAMQASVDAAQATLKQAQWQLAQTEIRAPVSGWVTNLTTRIGDYADTGKPLFALVDSHSFYVIGYFEETKLRHIREGAPAQITLYSDNKTLQGHVSSIGRAIYDQSVESDSSLIPDVKPNVPWVRLAQRVPVRFALDKVPGDVTLVSGTTCSIAVGQ.

A helical transmembrane segment spans residues 6 to 26; that stretch reads IKYFSTIIVAVVAVLAGWWLW.

The protein belongs to the membrane fusion protein (MFP) (TC 8.A.1) family.

Its subcellular location is the membrane. This is an uncharacterized protein from Escherichia coli (strain K12).